A 157-amino-acid chain; its full sequence is E3 ubiquitin-protein ligase RHA1B (157 aa).

The RING-type; atypical zinc finger occupies 85–129; the sequence is CTVCLSDFVSDDKIRQLPKCGHVFHHRCLDRWIVDCNKITCPICR.

It catalyses the reaction S-ubiquitinyl-[E2 ubiquitin-conjugating enzyme]-L-cysteine + [acceptor protein]-L-lysine = [E2 ubiquitin-conjugating enzyme]-L-cysteine + N(6)-ubiquitinyl-[acceptor protein]-L-lysine.. It functions in the pathway protein modification; protein ubiquitination. Its function is as follows. Possesses E3 ubiquitin-protein ligase activity when associated with the E2 enzyme UBC8 in vitro. This chain is E3 ubiquitin-protein ligase RHA1B, found in Arabidopsis thaliana (Mouse-ear cress).